A 750-amino-acid polypeptide reads, in one-letter code: Neprilysin (750 aa).

A compositionally biased stretch (polar residues) spans 1–14; that stretch reads MGRSESQMDITDIN. The disordered stretch occupies residues 1–20; it reads MGRSESQMDITDINTPKPKK. The N-myristoyl glycine moiety is linked to residue Gly-2. Residues 2-28 are Cytoplasmic-facing; that stretch reads GRSESQMDITDINTPKPKKKQRWTPLE. Phosphoserine occurs at positions 4 and 6. The Stop-transfer sequence signature appears at 16 to 23; it reads PKPKKKQR. Residues 29-51 form a helical; Signal-anchor for type II membrane protein membrane-spanning segment; that stretch reads ISLSVLVLLLTVIAVTMIALYAT. Over 52–750 the chain is Extracellular; that stretch reads YDDGICKSSD…MNPEKKCRVW (699 aa). The region spanning 56-750 is the Peptidase M13 domain; it reads ICKSSDCIKS…MNPEKKCRVW (695 aa). Cystine bridges form between Cys-57–Cys-62, Cys-80–Cys-735, Cys-88–Cys-695, Cys-143–Cys-411, Cys-234–Cys-242, and Cys-621–Cys-747. Arg-103 lines the a peptide pocket. N-linked (GlcNAc...) asparagine glycosylation occurs at Asn-145. Residues Asn-285, Asn-311, and Asn-325 are each glycosylated (N-linked (GlcNAc...) asparagine). His-584 contributes to the Zn(2+) binding site. Glu-585 is an active-site residue. His-588 is a binding site for Zn(2+). Asn-628 carries an N-linked (GlcNAc...) asparagine glycan. Residue Glu-647 participates in Zn(2+) binding. Catalysis depends on Asp-651, which acts as the Proton donor.

It belongs to the peptidase M13 family. Requires Zn(2+) as cofactor. Myristoylation is a determinant of membrane targeting. In terms of processing, glycosylation at Asn-628 is necessary both for surface expression and neutral endopeptidase activity.

Its subcellular location is the cell membrane. It catalyses the reaction Preferential cleavage of polypeptides between hydrophobic residues, particularly with Phe or Tyr at P1'.. The catalysed reaction is substance P + H2O = substance P(1-9) + L-Leu-L-Met-NH2. The enzyme catalyses substance P + H2O = substance P(1-7) + L-Phe-Gly-L-Leu-L-Met-NH2. It carries out the reaction neurotensin + H2O = neurotensin(1-11) + L-isoleucyl-L-leucine. It catalyses the reaction neurotensin + H2O = neurotensin(1-10) + L-tyrosyl-L-isoleucyl-L-leucine. With respect to regulation, inhibited by mixanpril, an orally-active drug used for the treatment of hypertension. Its function is as follows. Thermolysin-like specificity, but is almost confined on acting on polypeptides of up to 30 amino acids. Biologically important in the destruction of opioid peptides such as Met- and Leu-enkephalins by cleavage of a Gly-Phe bond. Catalyzes cleavage of bradykinin, substance P and neurotensin peptides. Able to cleave angiotensin-1, angiotensin-2 and angiotensin 1-9. Involved in the degradation of atrial natriuretic factor (ANF) and brain natriuretic factor (BNP(1-32)). Displays UV-inducible elastase activity toward skin preelastic and elastic fibers. The protein is Neprilysin (MME) of Oryctolagus cuniculus (Rabbit).